Reading from the N-terminus, the 318-residue chain is 2-keto-3-deoxygluconate permease (318 aa).

10 consecutive transmembrane segments (helical) span residues 10 to 30, 42 to 62, 82 to 102, 109 to 129, 139 to 159, 163 to 183, 194 to 214, 224 to 244, 257 to 277, and 289 to 309; these read LPGG…TLWP, GLIS…GATI, IAMA…GGVP, LSVL…YAAL, AGAV…LILG, LASF…LGFA, FFAQ…GNTL, ASGV…LLLA, VAAS…AGMA, and ALVA…TALY.

It belongs to the KdgT transporter family.

The protein localises to the cell inner membrane. It carries out the reaction 2-dehydro-3-deoxy-D-gluconate(in) + H(+)(in) = 2-dehydro-3-deoxy-D-gluconate(out) + H(+)(out). In terms of biological role, catalyzes the proton-dependent uptake of 2-keto-3-deoxygluconate (KDG) into the cell. This Xanthomonas euvesicatoria pv. vesicatoria (strain 85-10) (Xanthomonas campestris pv. vesicatoria) protein is 2-keto-3-deoxygluconate permease.